The sequence spans 280 residues: Ribosomal RNA small subunit methyltransferase A (280 aa).

Asparagine 27, leucine 29, glycine 54, glutamate 76, aspartate 102, and asparagine 122 together coordinate S-adenosyl-L-methionine.

It belongs to the class I-like SAM-binding methyltransferase superfamily. rRNA adenine N(6)-methyltransferase family. RsmA subfamily.

It is found in the cytoplasm. It carries out the reaction adenosine(1518)/adenosine(1519) in 16S rRNA + 4 S-adenosyl-L-methionine = N(6)-dimethyladenosine(1518)/N(6)-dimethyladenosine(1519) in 16S rRNA + 4 S-adenosyl-L-homocysteine + 4 H(+). Specifically dimethylates two adjacent adenosines (A1518 and A1519) in the loop of a conserved hairpin near the 3'-end of 16S rRNA in the 30S particle. May play a critical role in biogenesis of 30S subunits. The polypeptide is Ribosomal RNA small subunit methyltransferase A (Oleidesulfovibrio alaskensis (strain ATCC BAA-1058 / DSM 17464 / G20) (Desulfovibrio alaskensis)).